Here is an 813-residue protein sequence, read N- to C-terminus: Phosphoribosylformylglycinamidine synthase subunit PurL (813 aa).

The active site involves His-56. Tyr-59 and Lys-103 together coordinate ATP. Glu-105 lines the Mg(2+) pocket. Residues 106-109 (SHNH) and Arg-128 each bind substrate. The active-site Proton acceptor is the His-107. Position 129 (Asp-129) interacts with Mg(2+). Gln-253 is a binding site for substrate. Mg(2+) is bound at residue Asp-281. 325 to 327 (ESQ) serves as a coordination point for substrate. ATP contacts are provided by Asn-511 and Gly-548. Asn-549 is a binding site for Mg(2+). Residue Ser-551 coordinates substrate.

This sequence belongs to the FGAMS family. In terms of assembly, monomer. Part of the FGAM synthase complex composed of 1 PurL, 1 PurQ and 2 PurS subunits.

The protein resides in the cytoplasm. The enzyme catalyses N(2)-formyl-N(1)-(5-phospho-beta-D-ribosyl)glycinamide + L-glutamine + ATP + H2O = 2-formamido-N(1)-(5-O-phospho-beta-D-ribosyl)acetamidine + L-glutamate + ADP + phosphate + H(+). Its pathway is purine metabolism; IMP biosynthesis via de novo pathway; 5-amino-1-(5-phospho-D-ribosyl)imidazole from N(2)-formyl-N(1)-(5-phospho-D-ribosyl)glycinamide: step 1/2. Part of the phosphoribosylformylglycinamidine synthase complex involved in the purines biosynthetic pathway. Catalyzes the ATP-dependent conversion of formylglycinamide ribonucleotide (FGAR) and glutamine to yield formylglycinamidine ribonucleotide (FGAM) and glutamate. The FGAM synthase complex is composed of three subunits. PurQ produces an ammonia molecule by converting glutamine to glutamate. PurL transfers the ammonia molecule to FGAR to form FGAM in an ATP-dependent manner. PurS interacts with PurQ and PurL and is thought to assist in the transfer of the ammonia molecule from PurQ to PurL. This is Phosphoribosylformylglycinamidine synthase subunit PurL from Corynebacterium jeikeium (strain K411).